Here is a 1659-residue protein sequence, read N- to C-terminus: Intersectin-2 (1659 aa).

Residues 22–110 enclose the EH 1 domain; the sequence is ERTKHDKQFD…PIMKQPPMFS (89 aa). An EF-hand 1 domain is found at 54–89; sequence LPAPVLAEIWALSDLNKDGKMDQQEFSIAMKLIKLK. Ca(2+)-binding residues include aspartate 67, asparagine 69, aspartate 71, lysine 73, and glutamate 78. Phosphoserine occurs at positions 110, 211, and 231. Residues 220–231 show a composition bias toward low complexity; the sequence is STSSTASLSGNS. The disordered stretch occupies residues 220–242; sequence STSSTASLSGNSPKTGTSEWAVP. Residues 245–334 enclose the EH 2 domain; it reads SRLKYRQKFN…PELVPPSFRG (90 aa). The EF-hand 2 domain maps to 278–313; sequence LSQTQLATIWTLADIDGDGQLKAEEFILAMHLTDMA. Positions 335–382 are disordered; it reads GKQVDSVNGTLPSYQKTQEEEPQKKLPVTFEDKRKANYERGNMELEKR. Polar residues predominate over residues 339–350; sequence DSVNGTLPSYQK. Residues 351-382 are compositionally biased toward basic and acidic residues; sequence TQEEEPQKKLPVTFEDKRKANYERGNMELEKR. Positions 365–717 form a coiled coil; sequence EDKRKANYER…KAEAKQSETA (353 aa). At tyrosine 554 the chain carries Phosphotyrosine. Threonine 574 is subject to Phosphothreonine. Over residues 689-713 the composition is skewed to basic and acidic residues; the sequence is KQKRLQEEKSQDKTQEEERKAEAKQ. The interval 689–715 is disordered; the sequence is KQKRLQEEKSQDKTQEEERKAEAKQSE. The region spanning 718-779 is the SH3 1 domain; that stretch reads SALVNYRALY…PCNYVEKVLS (62 aa). Position 836 is a phosphothreonine (threonine 836). Residues serine 838 and serine 843 each carry the phosphoserine modification. The SH3 2 domain maps to 852–910; sequence VENLKAQALCSWTAKKENHLNFSKHDVITVLEQQENWWFGEVHGGRGWFPKSYVKLIPG. Tyrosine 922 is modified (phosphotyrosine). SH3 domains follow at residues 942–1000, 1014–1078, and 1088–1147; these read PVGE…PKDQ, KKPE…LLGP, and HAVC…MTTD. The 188-residue stretch at 1170 to 1357 folds into the DH domain; the sequence is KRQGYIHELI…EELCSQVNEG (188 aa). A PH domain is found at 1396–1506; the sequence is KLLHSGKLYK…WVQKIKGASE (111 aa). One can recognise a C2 domain in the interval 1514–1630; it reads KKREKAYQAR…RTEQESKGPT (117 aa). Ca(2+) is bound by residues aspartate 1602, serine 1605, and aspartate 1608.

In terms of assembly, belongs to a complex that may contain multimers of ITSN1, ITSN2 and EPS15, and different partners according to the step in the endocytic process. Interacts with ADAM15. Interacts with FASLG. Interacts with ANKRD54. Interacts with FCHO2. It depends on Ca(2+) as a cofactor. In terms of tissue distribution, widely expressed in adult tissues.

The protein localises to the cytoplasm. Adapter protein that may provide indirect link between the endocytic membrane traffic and the actin assembly machinery. May regulate the formation of clathrin-coated vesicles (CCPs). Seems to be involved in CCPs maturation including invagination or budding. Involved in endocytosis of integrin beta-1 (ITGB1) and transferrin receptor (TFR). Plays a role in dendrite formation by melanocytes. The protein is Intersectin-2 (Itsn2) of Mus musculus (Mouse).